The primary structure comprises 1154 residues: ATP-dependent RNA helicase DBP10 (1154 aa).

The tract at residues 16–58 is disordered; it reads FAARTISATSKPNRNDATASSSKPQKRARRSTKGSDDDGNDDF. Polar residues predominate over residues 21-38; sequence ISATSKPNRNDATASSSK. The Q motif motif lies at 144-172; sequence GSFQSMGLHPSLLRSLLIRGFTTPTPIQR. The Helicase ATP-binding domain occupies 177–363; sequence AIMSQPPRDV…KAGLQANPKL (187 aa). An ATP-binding site is contributed by 190–197; it reads ARTGSGKT. The DEAD box signature appears at 311–314; that stretch reads DEAD. Disordered regions lie at residues 417-462, 826-859, 885-939, and 1043-1154; these read QFNE…GPGG, IEGG…AGKA, FDTT…PNFY, and MPKT…GASR. Positions 438–451 are enriched in basic and acidic residues; the sequence is RRAEFKGKTKDKHL. The Helicase C-terminal domain maps to 446–602; it reads TKDKHLGNKR…SSHTAIAALA (157 aa). Composition is skewed to basic residues over residues 844–855 and 918–927; these read VAARNKGKKKAT and RHTKRARTKK. 2 stretches are compositionally biased toward basic and acidic residues: residues 1043–1061 and 1098–1133; these read MPKT…ERSP and AAKD…DTNR. Over residues 1134–1154 the composition is skewed to basic residues; sequence RAKRGAARRGRGGHGPRGASR.

Belongs to the DEAD box helicase family. DDX54/DBP10 subfamily.

It localises to the nucleus. Its subcellular location is the nucleolus. It carries out the reaction ATP + H2O = ADP + phosphate + H(+). In terms of biological role, ATP-binding RNA helicase involved in the biogenesis of 60S ribosomal subunits and is required for the normal formation of 25S and 5.8S rRNAs. This is ATP-dependent RNA helicase DBP10 (DBP10) from Mycosarcoma maydis (Corn smut fungus).